Consider the following 335-residue polypeptide: Autophagy-related protein 21 (335 aa).

2 WD repeats span residues 165–205 and 210–249; these read CHSS…LVTE and YIPASIVSISFHPVEPFLACASENGTIHVFKISKQPSDPN.

It belongs to the WD repeat PROPPIN family.

The protein resides in the cytoplasm. The protein localises to the golgi apparatus. Its subcellular location is the golgi stack membrane. It is found in the vacuole membrane. It localises to the preautophagosomal structure membrane. Its function is as follows. Required for cytoplasm to vacuole transport (Cvt) vesicles formation and autophagy. Has a role in sporulation. This Schizosaccharomyces pombe (strain 972 / ATCC 24843) (Fission yeast) protein is Autophagy-related protein 21 (mug179).